The primary structure comprises 130 residues: Small ribosomal subunit protein uS11 (130 aa).

The protein belongs to the universal ribosomal protein uS11 family. Part of the 30S ribosomal subunit.

Its function is as follows. Located on the platform of the 30S subunit. This Nanoarchaeum equitans (strain Kin4-M) protein is Small ribosomal subunit protein uS11.